A 143-amino-acid chain; its full sequence is Small ribosomal subunit protein uS12 (143 aa).

A compositionally biased stretch (basic residues) spans 1-19; that stretch reads MGKPRGLRTARKHVNHRRD. The interval 1–23 is disordered; it reads MGKPRGLRTARKHVNHRRDQRWA. Proline 62 is subject to 3-hydroxyproline.

It belongs to the universal ribosomal protein uS12 family. Component of the 40S small ribosomal subunit. Hydroxylation at Pro-62 affects translation termination efficiency.

It localises to the cytoplasm. The protein resides in the cytosol. The protein localises to the rough endoplasmic reticulum. The chain is Small ribosomal subunit protein uS12 (RpS23) from Drosophila melanogaster (Fruit fly).